Consider the following 1158-residue polypeptide: ATP-dependent helicase/deoxyribonuclease subunit B (1158 aa).

This sequence belongs to the helicase family. AddB/RexB type 2 subfamily. As to quaternary structure, heterodimer of AddA and RexB. The cofactor is Mg(2+).

In terms of biological role, the heterodimer acts as both an ATP-dependent DNA helicase and an ATP-dependent, dual-direction single-stranded exonuclease. Recognizes the chi site generating a DNA molecule suitable for the initiation of homologous recombination. This subunit has 5' -&gt; 3' nuclease activity but not helicase activity. The sequence is that of ATP-dependent helicase/deoxyribonuclease subunit B from Lactobacillus gasseri (strain ATCC 33323 / DSM 20243 / BCRC 14619 / CIP 102991 / JCM 1131 / KCTC 3163 / NCIMB 11718 / NCTC 13722 / AM63).